A 312-amino-acid polypeptide reads, in one-letter code: MNNIHTPVMATEMLSYLAPVDNETYLDCTFGTGGYSKLILSNCNCKIIAFDRDPAVISIASQFYQQYSNRFTFFNDNFVEANKYLSKSAKLNGIVMDLGVSSMQLDAANRGFSFRYDAELDMRMSQKGYKASELVNEASEHQLADIIYKFGEENKANKIAKHIVLAREKKPITTTLQLANIIREAVGYNNYYKKNKIDSATKTFQAIRIFINDELSAIQNFLNQSLELLAVNGRLIVVSFHALEDAIVKKFMHQNAVKKVAQSKYSTNKQLPLQNGVLHLLTKKIAVPTRTEIINNPRSRSARLRAALKINE.

S-adenosyl-L-methionine is bound by residues 33-35 (GGY), aspartate 51, phenylalanine 78, aspartate 97, and glutamine 104.

It belongs to the methyltransferase superfamily. RsmH family.

The protein resides in the cytoplasm. It catalyses the reaction cytidine(1402) in 16S rRNA + S-adenosyl-L-methionine = N(4)-methylcytidine(1402) in 16S rRNA + S-adenosyl-L-homocysteine + H(+). Specifically methylates the N4 position of cytidine in position 1402 (C1402) of 16S rRNA. In Orientia tsutsugamushi (strain Boryong) (Rickettsia tsutsugamushi), this protein is Ribosomal RNA small subunit methyltransferase H.